A 100-amino-acid chain; its full sequence is Flagellar transcriptional regulator FlhD (100 aa).

The protein belongs to the FlhD family. As to quaternary structure, homodimer; disulfide-linked. Forms a heterohexamer composed of two FlhC and four FlhD subunits. Each FlhC binds a FlhD dimer, forming a heterotrimer, and a hexamer assembles by dimerization of two heterotrimers.

The protein localises to the cytoplasm. In terms of biological role, functions in complex with FlhC as a master transcriptional regulator that regulates transcription of several flagellar and non-flagellar operons by binding to their promoter region. Activates expression of class 2 flagellar genes, including fliA, which is a flagellum-specific sigma factor that turns on the class 3 genes. Also regulates genes whose products function in a variety of physiological pathways. In Ralstonia pickettii (strain 12D), this protein is Flagellar transcriptional regulator FlhD.